Reading from the N-terminus, the 343-residue chain is MGKKRKITDEKDAQHVPAEKREKVENWLKKSTEKPTSSQSDAEKKKKRPWRNKVRKLAAKKAAADKKSENPEEPPLILEPKSSSDENTKKKRKRGPKKKKFKPEVAGKAAETENDDVAAAPEEADPIAEAKKRLDAGRFRFLNEKLYTCTGSEAFDFFKEDPTAFDLYHKGFADQVKKWPNHPLREIIRWLQSKPDQQSVFDLGCGEAKIAEAVGEKHKIRSFDLVAVNDRVESCDMSKLPAEDSSADIVIYCLSLMGTNLYDFIREARRVLKIGGILKIAEVTSRFVSIKQFCEAITKMGFEQSHRRELTDYFMMMEFKKVEKVEQKRPYGLKLKPCLYKKR.

The segment at 1-123 (MGKKRKITDE…NDDVAAAPEE (123 aa)) is disordered. Basic and acidic residues predominate over residues 7-33 (ITDEKDAQHVPAEKREKVENWLKKSTE). Basic residues-rich tracts occupy residues 45–59 (KKKRPWRNKVRKLAA) and 89–101 (KKKRKRGPKKKKF). Residues 112 to 123 (TENDDVAAAPEE) are compositionally biased toward acidic residues. Positions 169, 204, 224, 236, 237, and 253 each coordinate S-adenosyl-L-methionine.

It belongs to the methyltransferase superfamily. RRP8 family.

It localises to the nucleus. It is found in the nucleolus. Its function is as follows. Probable methyltransferase required to silence rDNA. Involved in regulation of antisense ribosomal siRNA production. Required for the N1-methyladenosine modification of 26S rRNAs. The sequence is that of Ribosomal RNA-processing protein 8 (rrp-8) from Caenorhabditis elegans.